The following is a 231-amino-acid chain: Flagellar L-ring protein (231 aa).

Positions 1–18 (MNRYVSVLALSGIAVLAG) are cleaved as a signal peptide. The N-palmitoyl cysteine moiety is linked to residue Cys-19. Cys-19 carries S-diacylglycerol cysteine lipidation.

The protein belongs to the FlgH family. In terms of assembly, the basal body constitutes a major portion of the flagellar organelle and consists of four rings (L,P,S, and M) mounted on a central rod.

Its subcellular location is the cell outer membrane. The protein resides in the bacterial flagellum basal body. Assembles around the rod to form the L-ring and probably protects the motor/basal body from shearing forces during rotation. The sequence is that of Flagellar L-ring protein from Pseudomonas fluorescens (strain SBW25).